Here is a 347-residue protein sequence, read N- to C-terminus: Dual-specificity RNA methyltransferase RlmN (347 aa).

Glutamate 93 (proton acceptor) is an active-site residue. Residues 99–327 form the Radical SAM core domain; sequence DEGRNTLCIS…VITRDSRGSD (229 aa). Cysteines 106 and 332 form a disulfide. 3 residues coordinate [4Fe-4S] cluster: cysteine 113, cysteine 117, and cysteine 120. S-adenosyl-L-methionine-binding positions include 158–159, serine 190, 213–215, and asparagine 289; these read GE and SLN. Catalysis depends on cysteine 332, which acts as the S-methylcysteine intermediate.

Belongs to the radical SAM superfamily. RlmN family. It depends on [4Fe-4S] cluster as a cofactor.

It is found in the cytoplasm. It carries out the reaction adenosine(2503) in 23S rRNA + 2 reduced [2Fe-2S]-[ferredoxin] + 2 S-adenosyl-L-methionine = 2-methyladenosine(2503) in 23S rRNA + 5'-deoxyadenosine + L-methionine + 2 oxidized [2Fe-2S]-[ferredoxin] + S-adenosyl-L-homocysteine. It catalyses the reaction adenosine(37) in tRNA + 2 reduced [2Fe-2S]-[ferredoxin] + 2 S-adenosyl-L-methionine = 2-methyladenosine(37) in tRNA + 5'-deoxyadenosine + L-methionine + 2 oxidized [2Fe-2S]-[ferredoxin] + S-adenosyl-L-homocysteine. Its function is as follows. Specifically methylates position 2 of adenine 2503 in 23S rRNA and position 2 of adenine 37 in tRNAs. m2A2503 modification seems to play a crucial role in the proofreading step occurring at the peptidyl transferase center and thus would serve to optimize ribosomal fidelity. This is Dual-specificity RNA methyltransferase RlmN from Pelobacter propionicus (strain DSM 2379 / NBRC 103807 / OttBd1).